Reading from the N-terminus, the 93-residue chain is Small ribosomal subunit protein uS19 (93 aa).

Belongs to the universal ribosomal protein uS19 family.

In terms of biological role, protein S19 forms a complex with S13 that binds strongly to the 16S ribosomal RNA. This chain is Small ribosomal subunit protein uS19, found in Leptospira borgpetersenii serovar Hardjo-bovis (strain JB197).